The following is a 232-amino-acid chain: Homeobox protein SAX-1 (232 aa).

Disordered regions lie at residues 1-64, 122-150, and 185-208; these read CLPD…SCAK, KQHP…RPAA, and LLGA…LCPS. Residues 65–124 constitute a DNA-binding region (homeobox); sequence PRRARTAFTYEQLVALENKFRATRYLSVCERLNLALSLSLTETQVKIWFQNRRTKWKKQH. Residues 126–142 are compositionally biased toward low complexity; it reads GADGAAAPAPPAAARCS.

The protein belongs to the NK-1 homeobox family. As to expression, transiently expressed in the birth zone of the whole spinal cord regardless of the axial level.

It is found in the nucleus. In Gallus gallus (Chicken), this protein is Homeobox protein SAX-1 (SAX1).